Reading from the N-terminus, the 159-residue chain is Transcription elongation factor GreA (159 aa).

It belongs to the GreA/GreB family.

Its function is as follows. Necessary for efficient RNA polymerase transcription elongation past template-encoded arresting sites. The arresting sites in DNA have the property of trapping a certain fraction of elongating RNA polymerases that pass through, resulting in locked ternary complexes. Cleavage of the nascent transcript by cleavage factors such as GreA or GreB allows the resumption of elongation from the new 3'terminus. GreA releases sequences of 2 to 3 nucleotides. This chain is Transcription elongation factor GreA, found in Mycoplasmoides gallisepticum (strain R(low / passage 15 / clone 2)) (Mycoplasma gallisepticum).